Reading from the N-terminus, the 241-residue chain is Small ribosomal subunit protein uS2 (241 aa).

The protein belongs to the universal ribosomal protein uS2 family.

The chain is Small ribosomal subunit protein uS2 from Escherichia coli (strain 55989 / EAEC).